Consider the following 419-residue polypeptide: Zinc finger protein Pegasus (419 aa).

3 consecutive C2H2-type zinc fingers follow at residues 79-101, 107-129, and 135-158; these read LKCR…IRIH, HRCH…MRSH, and YKCE…RRRH. Disordered stretches follow at residues 203-255 and 310-360; these read LQKP…DQDM and SVNT…TPVQ. Residues 208 to 228 are compositionally biased toward basic and acidic residues; the sequence is SEQHHLGDFTHDLPPHAHLHQ. 2 stretches are compositionally biased toward polar residues: residues 310-320 and 341-360; these read SVNTAQASSPI and ERTS…TPVQ. 2 consecutive C2H2-type zinc fingers follow at residues 366 to 388 and 394 to 418; these read HHCP…MGCH and FQCN…RGQH.

Belongs to the Ikaros C2H2-type zinc-finger protein family. Probably self-associates.

It localises to the nucleus. Transcriptional repressor that binds the core 5'GNNTGTNG-3' DNA consensus sequence. In Danio rerio (Zebrafish), this protein is Zinc finger protein Pegasus (ikzf5).